The sequence spans 287 residues: Large ribosomal subunit protein uL2 (287 aa).

Positions 221 to 287 are disordered; the sequence is RGSVMNPCDH…SKRSRGGRDS (67 aa). Residues 258–287 are compositionally biased toward basic residues; that stretch reads KTRKRNKPSNRFVLRKRRRTSKRSRGGRDS.

It belongs to the universal ribosomal protein uL2 family. In terms of assembly, part of the 50S ribosomal subunit. Forms a bridge to the 30S subunit in the 70S ribosome.

Its function is as follows. One of the primary rRNA binding proteins. Required for association of the 30S and 50S subunits to form the 70S ribosome, for tRNA binding and peptide bond formation. It has been suggested to have peptidyltransferase activity; this is somewhat controversial. Makes several contacts with the 16S rRNA in the 70S ribosome. The sequence is that of Large ribosomal subunit protein uL2 from Prochlorococcus marinus (strain MIT 9303).